Here is a 185-residue protein sequence, read N- to C-terminus: Lipopolysaccharide export system protein LptA (185 aa).

The signal sequence occupies residues 1-27; the sequence is MKFKTNKLSLNLVLASSLLAASIPAFA. The interval 166–185 is disordered; that stretch reads PSQLQDKNNKGQTPAQKKGN.

It belongs to the LptA family. In terms of assembly, component of the lipopolysaccharide transport and assembly complex.

The protein localises to the periplasm. Involved in the assembly of lipopolysaccharide (LPS). Required for the translocation of LPS from the inner membrane to the outer membrane. May form a bridge between the inner membrane and the outer membrane, via interactions with LptC and LptD, thereby facilitating LPS transfer across the periplasm. The sequence is that of Lipopolysaccharide export system protein LptA from Escherichia coli O157:H7.